The sequence spans 372 residues: MAHETTSGRRLPDPTSPSDPTRRTAAIRIPFPARLNPHAERARQHTLQWVQETGLLTGDEATAEYDTLRLERLMAYFYPDASAGDLELAADFNAWFFIFDDQFDGGLGTRPHEIRGVVDALVGTMTTDGAPRPADVRDTPLVRAFRDIWLRSTAGAPYAWRLRFRDHWQAYLAAHVGEAHHRNADRLPSLEQFLEVRRHSIGVQPCLDFTERCGGYALPDELYRSFPLREMREITGDVVIFVNDIVSLVKELAAGDINNSVVIEREHKGCTLEESVEHITALANARTARFARLAASLPGTLADLGVPAPSREHVSHYVDGMRHVMAGNLSWSLATSRYDETGIAAVSGGRRRPWDGLTTATGTASPRHPRRA.

Over residues 1–12 (MAHETTSGRRLP) the composition is skewed to basic and acidic residues. The tract at residues 1 to 23 (MAHETTSGRRLPDPTSPSDPTRR) is disordered. Residues Asp-100 and Asp-104 each coordinate Mg(2+). The DDXXD motif signature appears at 100–104 (DDQFD). Arg-197 is a binding site for substrate. Asn-243 and Ser-247 together coordinate Mg(2+). Lys-250 lines the substrate pocket. Glu-251 lines the Mg(2+) pocket. Residue 337-338 (RY) coordinates substrate. The tract at residues 349-372 (GRRRPWDGLTTATGTASPRHPRRA) is disordered.

Belongs to the terpene synthase family. Mg(2+) is required as a cofactor.

The catalysed reaction is (2E,6E)-farnesyl diphosphate + H2O = (+)-(2S,3R,9R)-pristinol + diphosphate. The protein operates within secondary metabolite biosynthesis; terpenoid biosynthesis. Its function is as follows. Catalyzes the conversion of (2E,6E)-farnesyl diphosphate (FPP) to yield a new 5-8 bicyclic (pristinane) sesquiterpenol (+)-(2S,3R,9R)-pristinol via a 1,11-cyclization, which requires the abstraction of the pyrophosphate from FPP to yield the humulyl cation. The only accepted substrate is farnesyl diphosphate (FPP). This is Pristinol synthase from Streptomyces pristinaespiralis (strain ATCC 25486 / DSM 40338 / CBS 914.69 / JCM 4507 / KCC S-0507 / NBRC 13074 / NRRL 2958 / 5647).